A 304-amino-acid polypeptide reads, in one-letter code: Acetylglutamate kinase (304 aa).

Substrate is bound by residues G70–G71, R92, and N196.

Belongs to the acetylglutamate kinase family. ArgB subfamily.

The protein resides in the cytoplasm. It catalyses the reaction N-acetyl-L-glutamate + ATP = N-acetyl-L-glutamyl 5-phosphate + ADP. It participates in amino-acid biosynthesis; L-arginine biosynthesis; N(2)-acetyl-L-ornithine from L-glutamate: step 2/4. In terms of biological role, catalyzes the ATP-dependent phosphorylation of N-acetyl-L-glutamate. This Methanococcoides burtonii (strain DSM 6242 / NBRC 107633 / OCM 468 / ACE-M) protein is Acetylglutamate kinase.